The primary structure comprises 495 residues: ATP synthase subunit beta, chloroplastic (495 aa).

172-179 (GGAGVGKT) provides a ligand contact to ATP.

This sequence belongs to the ATPase alpha/beta chains family. In terms of assembly, F-type ATPases have 2 components, CF(1) - the catalytic core - and CF(0) - the membrane proton channel. CF(1) has five subunits: alpha(3), beta(3), gamma(1), delta(1), epsilon(1). CF(0) has four main subunits: a(1), b(1), b'(1) and c(9-12).

The protein resides in the plastid. Its subcellular location is the chloroplast thylakoid membrane. The catalysed reaction is ATP + H2O + 4 H(+)(in) = ADP + phosphate + 5 H(+)(out). Produces ATP from ADP in the presence of a proton gradient across the membrane. The catalytic sites are hosted primarily by the beta subunits. The chain is ATP synthase subunit beta, chloroplastic from Convallaria majalis (Lily of the valley).